Consider the following 152-residue polypeptide: D-aminoacyl-tRNA deacylase (152 aa).

A Gly-cisPro motif, important for rejection of L-amino acids motif is present at residues 142-143 (GP).

This sequence belongs to the DTD family. As to quaternary structure, homodimer.

It is found in the cytoplasm. It carries out the reaction glycyl-tRNA(Ala) + H2O = tRNA(Ala) + glycine + H(+). It catalyses the reaction a D-aminoacyl-tRNA + H2O = a tRNA + a D-alpha-amino acid + H(+). An aminoacyl-tRNA editing enzyme that deacylates mischarged D-aminoacyl-tRNAs. Also deacylates mischarged glycyl-tRNA(Ala), protecting cells against glycine mischarging by AlaRS. Acts via tRNA-based rather than protein-based catalysis; rejects L-amino acids rather than detecting D-amino acids in the active site. By recycling D-aminoacyl-tRNA to D-amino acids and free tRNA molecules, this enzyme counteracts the toxicity associated with the formation of D-aminoacyl-tRNA entities in vivo and helps enforce protein L-homochirality. The chain is D-aminoacyl-tRNA deacylase from Paraburkholderia xenovorans (strain LB400).